Consider the following 229-residue polypeptide: MEHPYLFFVKLFEALGFEHFAHTSVHIIYTWVVMALLITLGVLGARNIQIVPTKMQNFLEVLISGIEEFMVSVTGEEGRWFFPLAGTIAIFIAVSNLIGLVPGFFPPTASINTPLACAIVVFVFTHFIGIKYHGPKYIKHFLGPVWWLAPLIFPIEIIGHLARVLSLTFRLFGNMMGHESVLVILFMLGGAFFAPLPIMALGIFVAFVQAFVFFLLSVMYFAGAMEHAH.

The next 7 helical transmembrane spans lie at 25-45 (VHIIYTWVVMALLITLGVLGA), 58-75 (FLEVLISGIEEFMVSVTG), 81-101 (FFPLAGTIAIFIAVSNLIGLV), 110-130 (SINTPLACAIVVFVFTHFIGI), 141-161 (FLGPVWWLAPLIFPIEIIGHL), 175-195 (MMGHESVLVILFMLGGAFFAP), and 196-216 (LPIMALGIFVAFVQAFVFFLL).

This sequence belongs to the ATPase A chain family. As to quaternary structure, F-type ATPases have 2 components, CF(1) - the catalytic core - and CF(0) - the membrane proton channel. CF(1) has five subunits: alpha(3), beta(3), gamma(1), delta(1), epsilon(1). CF(0) has three main subunits: a(1), b(2) and c(9-12). The alpha and beta chains form an alternating ring which encloses part of the gamma chain. CF(1) is attached to CF(0) by a central stalk formed by the gamma and epsilon chains, while a peripheral stalk is formed by the delta and b chains.

The protein localises to the cell inner membrane. Functionally, key component of the proton channel; it plays a direct role in the translocation of protons across the membrane. In Desulfosudis oleivorans (strain DSM 6200 / JCM 39069 / Hxd3) (Desulfococcus oleovorans), this protein is ATP synthase subunit a.